A 407-amino-acid chain; its full sequence is Rubber oxygenase (407 aa).

The tat-type signal signal peptide spans 1 to 30 (MDGFSRRRMLMTGGALGAVGALGAATRALA). His-198 contacts heme.

It belongs to the rubber oxygenase Lcp family. It depends on heme b as a cofactor. Post-translationally, exported by the Tat system. The position of the signal peptide cleavage has not been experimentally proven.

Its subcellular location is the secreted. The protein operates within biopolymer metabolism. Functionally, involved in the initial step of rubber degradation. Catalyzes the oxidative C-C cleavage of poly(cis-1,4-isoprene) in synthetic as well as in natural rubber by the addition of oxygen (O2) to the double bonds, leading to a mixture of oligonucleotide-isoprenoids with terminal keto and aldehyde groups (endo-type cleavage). The cleavage products are of different lengths, ranging from C20 (four isoprene units) to higher oligo-isoprenoids. Is not able to cleave low-molecular-weight substrate analogs with isoprenoid structure such as squalene (1,4-trans-isoprenoid), carotenoids, or alpha-tocopherol. In Streptomyces sp. (strain K30), this protein is Rubber oxygenase.